Reading from the N-terminus, the 445-residue chain is Chromosomal replication initiator protein DnaA (445 aa).

A domain I, interacts with DnaA modulators region spans residues 1–69; it reads MEKIWLEAQS…IEAISSLTNI (69 aa). Positions 69–108 are domain II; the sequence is IKYQVDFKITEKSQVEKKKVDLQATEKIENDSTRNVDFNT. The tract at residues 109-325 is domain III, AAA+ region; sequence NLNPKYTFDS…GMLIRLGAYA (217 aa). Positions 153, 155, 156, and 157 each coordinate ATP. The tract at residues 326–445 is domain IV, binds dsDNA; that stretch reads SLTGSEISLN…VEKMKKELMS (120 aa).

The protein belongs to the DnaA family. In terms of assembly, oligomerizes as a right-handed, spiral filament on DNA at oriC.

The protein resides in the cytoplasm. Its function is as follows. Plays an essential role in the initiation and regulation of chromosomal replication. ATP-DnaA binds to the origin of replication (oriC) to initiate formation of the DNA replication initiation complex once per cell cycle. Binds the DnaA box (a 9 base pair repeat at the origin) and separates the double-stranded (ds)DNA. Forms a right-handed helical filament on oriC DNA; dsDNA binds to the exterior of the filament while single-stranded (ss)DNA is stabiized in the filament's interior. The ATP-DnaA-oriC complex binds and stabilizes one strand of the AT-rich DNA unwinding element (DUE), permitting loading of DNA polymerase. After initiation quickly degrades to an ADP-DnaA complex that is not apt for DNA replication. Binds acidic phospholipids. In Geotalea daltonii (strain DSM 22248 / JCM 15807 / FRC-32) (Geobacter daltonii), this protein is Chromosomal replication initiator protein DnaA.